The following is a 700-amino-acid chain: Elongation factor G (700 aa).

The tr-type G domain maps to 13 to 288 (SKIRNIGITA…AVIDYLPAPD (276 aa)). Residues 22 to 29 (AHIDAGKT), 86 to 90 (DTPGH), and 140 to 143 (NKLD) each bind GTP.

This sequence belongs to the TRAFAC class translation factor GTPase superfamily. Classic translation factor GTPase family. EF-G/EF-2 subfamily.

The protein resides in the cytoplasm. Its function is as follows. Catalyzes the GTP-dependent ribosomal translocation step during translation elongation. During this step, the ribosome changes from the pre-translocational (PRE) to the post-translocational (POST) state as the newly formed A-site-bound peptidyl-tRNA and P-site-bound deacylated tRNA move to the P and E sites, respectively. Catalyzes the coordinated movement of the two tRNA molecules, the mRNA and conformational changes in the ribosome. This is Elongation factor G from Gluconobacter oxydans (strain 621H) (Gluconobacter suboxydans).